Consider the following 288-residue polypeptide: Shikimate dehydrogenase (NADP(+)) (288 aa).

Shikimate contacts are provided by residues 18-20 (SRS) and Thr65. Residue Lys69 is the Proton acceptor of the active site. Residue Glu81 coordinates NADP(+). Shikimate-binding residues include Asn90 and Asp106. Residues 131–135 (GAGGA), 155–160 (NRTLAK), and Met223 contribute to the NADP(+) site. Tyr225 contacts shikimate. NADP(+) is bound at residue Gly246.

It belongs to the shikimate dehydrogenase family. As to quaternary structure, homodimer.

It catalyses the reaction shikimate + NADP(+) = 3-dehydroshikimate + NADPH + H(+). Its pathway is metabolic intermediate biosynthesis; chorismate biosynthesis; chorismate from D-erythrose 4-phosphate and phosphoenolpyruvate: step 4/7. Its function is as follows. Involved in the biosynthesis of the chorismate, which leads to the biosynthesis of aromatic amino acids. Catalyzes the reversible NADPH linked reduction of 3-dehydroshikimate (DHSA) to yield shikimate (SA). This Verminephrobacter eiseniae (strain EF01-2) protein is Shikimate dehydrogenase (NADP(+)).